A 214-amino-acid polypeptide reads, in one-letter code: Adenylate kinase (214 aa).

14–19 (GSGKGT) is an ATP binding site. Residues 32–61 (SVGKVLRTVMESNTAEADVVKKFIKSGKLV) are NMP. Residues R38, 59–61 (KLV), 87–90 (GYPR), and Q94 contribute to the AMP site. The tract at residues 124-162 (GRISCTDCGTIYNKLYCMPKINGVCDICNSSSFQNRVDD) is LID. R125 lines the ATP pocket. Zn(2+) is bound by residues C128 and C131. 134–135 (IY) is an ATP binding site. C148 and C151 together coordinate Zn(2+). The AMP site is built by R159 and R170. An ATP-binding site is contributed by Q198.

This sequence belongs to the adenylate kinase family. In terms of assembly, monomer.

Its subcellular location is the cytoplasm. It carries out the reaction AMP + ATP = 2 ADP. The protein operates within purine metabolism; AMP biosynthesis via salvage pathway; AMP from ADP: step 1/1. In terms of biological role, catalyzes the reversible transfer of the terminal phosphate group between ATP and AMP. Plays an important role in cellular energy homeostasis and in adenine nucleotide metabolism. This chain is Adenylate kinase, found in Orientia tsutsugamushi (strain Ikeda) (Rickettsia tsutsugamushi).